A 299-amino-acid polypeptide reads, in one-letter code: MKFLTVAAAIFASTSLAVPTNNHNGGGACVPRPNPGNSNTSSAPGGNPTGGHTSSGPGTKPTGSHTSSGPATKPTDGNTSSGPGTKPTDGNTSSGIDCEVPRHAPTSGDDFKGICAAVGKQPLCCVIPVAGQDLLCQDITGGNSPSGQPTSVPGGQSTSVPGGNPTSIPGGQPTSVPGGQPTSVPGGHPTSAPTGHPTSVPGGQPTSVPGGNPTSVPGHHNPSPVGNDPSCCPSGLYSNPQCCAANVLGLADLDCSTPSQTFTTGDEFRNICATIGRQPMCCVLPVAGQAVLCEKPVGV.

The N-terminal stretch at 1-17 is a signal peptide; the sequence is MKFLTVAAAIFASTSLA. 3 N-linked (GlcNAc...) asparagine glycosylation sites follow: N39, N78, and N91. 4 cysteine pairs are disulfide-bonded: C232–C281, C242–C272, C243–C255, and C282–C293.

It belongs to the cerato-ulmin hydrophobin family.

It is found in the secreted. It localises to the cell wall. The protein localises to the vacuole. The protein resides in the cytoplasmic vesicle. Aerial growth, conidiation, and dispersal of filamentous fungi in the environment rely upon a capability of their secreting small amphipathic proteins called hydrophobins (HPBs) with low sequence identity. Class I can self-assemble into an outermost layer of rodlet bundles on aerial cell surfaces, conferring cellular hydrophobicity that supports fungal growth, development and dispersal; whereas Class II form highly ordered films at water-air interfaces through intermolecular interactions but contribute nothing to the rodlet structure. Hyd2C contributes to certain cell wall-related features, such as hydrophobicity but is not involved in cell wall-related events during fungal proliferation in host hemocoel. Does not contribute to conidial hydrophobicity. Involved actively in the asexual development. This is Class II hydrophobin C from Beauveria bassiana (strain ARSEF 2860) (White muscardine disease fungus).